The following is a 195-amino-acid chain: Protein GrpE (195 aa).

This sequence belongs to the GrpE family. As to quaternary structure, homodimer.

Its subcellular location is the cytoplasm. Functionally, participates actively in the response to hyperosmotic and heat shock by preventing the aggregation of stress-denatured proteins, in association with DnaK and GrpE. It is the nucleotide exchange factor for DnaK and may function as a thermosensor. Unfolded proteins bind initially to DnaJ; upon interaction with the DnaJ-bound protein, DnaK hydrolyzes its bound ATP, resulting in the formation of a stable complex. GrpE releases ADP from DnaK; ATP binding to DnaK triggers the release of the substrate protein, thus completing the reaction cycle. Several rounds of ATP-dependent interactions between DnaJ, DnaK and GrpE are required for fully efficient folding. The protein is Protein GrpE of Francisella tularensis subsp. mediasiatica (strain FSC147).